Reading from the N-terminus, the 2288-residue chain is Protein Ycf2 (2288 aa).

1629–1636 (GSIGTGRS) contacts ATP.

Belongs to the Ycf2 family.

It localises to the plastid. Its subcellular location is the chloroplast stroma. In terms of biological role, probable ATPase of unknown function. Its presence in a non-photosynthetic plant (Epifagus virginiana) and experiments in tobacco indicate that it has an essential function which is probably not related to photosynthesis. This Phaseolus vulgaris (Kidney bean) protein is Protein Ycf2.